A 502-amino-acid polypeptide reads, in one-letter code: Probable cytosol aminopeptidase (502 aa).

Positions 269 and 274 each coordinate Mn(2+). Lys-281 is a catalytic residue. Positions 292, 351, and 353 each coordinate Mn(2+). Arg-355 is an active-site residue.

This sequence belongs to the peptidase M17 family. Requires Mn(2+) as cofactor.

The protein resides in the cytoplasm. The catalysed reaction is Release of an N-terminal amino acid, Xaa-|-Yaa-, in which Xaa is preferably Leu, but may be other amino acids including Pro although not Arg or Lys, and Yaa may be Pro. Amino acid amides and methyl esters are also readily hydrolyzed, but rates on arylamides are exceedingly low.. It catalyses the reaction Release of an N-terminal amino acid, preferentially leucine, but not glutamic or aspartic acids.. Its function is as follows. Presumably involved in the processing and regular turnover of intracellular proteins. Catalyzes the removal of unsubstituted N-terminal amino acids from various peptides. The sequence is that of Probable cytosol aminopeptidase from Shewanella frigidimarina (strain NCIMB 400).